The sequence spans 186 residues: Peptidyl-tRNA hydrolase (186 aa).

TRNA is bound at residue Y14. H19 acts as the Proton acceptor in catalysis. Positions 61, 63, and 107 each coordinate tRNA.

Belongs to the PTH family. In terms of assembly, monomer.

Its subcellular location is the cytoplasm. The catalysed reaction is an N-acyl-L-alpha-aminoacyl-tRNA + H2O = an N-acyl-L-amino acid + a tRNA + H(+). In terms of biological role, hydrolyzes ribosome-free peptidyl-tRNAs (with 1 or more amino acids incorporated), which drop off the ribosome during protein synthesis, or as a result of ribosome stalling. Functionally, catalyzes the release of premature peptidyl moieties from peptidyl-tRNA molecules trapped in stalled 50S ribosomal subunits, and thus maintains levels of free tRNAs and 50S ribosomes. In Helicobacter pylori (strain G27), this protein is Peptidyl-tRNA hydrolase.